Consider the following 598-residue polypeptide: Beta-fructofuranosidase, insoluble isoenzyme 2 (598 aa).

Residues 1 to 25 (MGVLGSRVAWAWLVQLLLLQQLAGA) form the signal peptide. D69 is an active-site residue. N-linked (GlcNAc...) asparagine glycosylation is found at N164, N189, and N348.

Belongs to the glycosyl hydrolase 32 family.

Its subcellular location is the secreted. The protein localises to the extracellular space. It localises to the apoplast. It is found in the cell wall. The catalysed reaction is Hydrolysis of terminal non-reducing beta-D-fructofuranoside residues in beta-D-fructofuranosides.. In terms of biological role, may play a role in sucrose partitioning during seed development. This chain is Beta-fructofuranosidase, insoluble isoenzyme 2 (CIN2), found in Oryza sativa subsp. indica (Rice).